We begin with the raw amino-acid sequence, 373 residues long: L-threonine 3-dehydrogenase, mitochondrial (373 aa).

NAD(+) is bound by residues 62 to 67, 88 to 90, 106 to 107, Y195, K199, and I225; these read GGLGQL, DIR, and DI. The active-site Proton donor/acceptor is Y195.

It belongs to the NAD(P)-dependent epimerase/dehydratase family. Homodimer.

It is found in the mitochondrion. It catalyses the reaction L-threonine + NAD(+) = (2S)-2-amino-3-oxobutanoate + NADH + H(+). The protein operates within amino-acid degradation; L-threonine degradation via oxydo-reductase pathway; glycine from L-threonine: step 1/2. Its function is as follows. Catalyzes the NAD(+)-dependent oxidation of L-threonine to 2-amino-3-ketobutyrate, mediating L-threonine catabolism. This Sus scrofa (Pig) protein is L-threonine 3-dehydrogenase, mitochondrial.